The chain runs to 206 residues: ATP phosphoribosyltransferase (206 aa).

It belongs to the ATP phosphoribosyltransferase family. Short subfamily. In terms of assembly, heteromultimer composed of HisG and HisZ subunits.

It localises to the cytoplasm. The catalysed reaction is 1-(5-phospho-beta-D-ribosyl)-ATP + diphosphate = 5-phospho-alpha-D-ribose 1-diphosphate + ATP. The protein operates within amino-acid biosynthesis; L-histidine biosynthesis; L-histidine from 5-phospho-alpha-D-ribose 1-diphosphate: step 1/9. Functionally, catalyzes the condensation of ATP and 5-phosphoribose 1-diphosphate to form N'-(5'-phosphoribosyl)-ATP (PR-ATP). Has a crucial role in the pathway because the rate of histidine biosynthesis seems to be controlled primarily by regulation of HisG enzymatic activity. The sequence is that of ATP phosphoribosyltransferase from Leptospira interrogans serogroup Icterohaemorrhagiae serovar copenhageni (strain Fiocruz L1-130).